We begin with the raw amino-acid sequence, 149 residues long: Pleckstrin homology domain-containing family J member 1 (149 aa).

The region spanning 15–108 (RAEKAAELGM…WVEALTNASY (94 aa)) is the PH domain.

In Xenopus laevis (African clawed frog), this protein is Pleckstrin homology domain-containing family J member 1 (plekhj1).